A 107-amino-acid chain; its full sequence is Integration host factor subunit beta (107 aa).

Basic and acidic residues predominate over residues 82–101 (PGKELRERVDRRAGEPLKAE). The disordered stretch occupies residues 82-107 (PGKELRERVDRRAGEPLKAEEPDDDL).

The protein belongs to the bacterial histone-like protein family. In terms of assembly, heterodimer of an alpha and a beta chain.

In terms of biological role, this protein is one of the two subunits of integration host factor, a specific DNA-binding protein that functions in genetic recombination as well as in transcriptional and translational control. The polypeptide is Integration host factor subunit beta (Paraburkholderia phytofirmans (strain DSM 17436 / LMG 22146 / PsJN) (Burkholderia phytofirmans)).